The chain runs to 362 residues: Beta-ketoacyl-[acyl-carrier-protein] synthase III 2 (362 aa).

Residues Cys113 and His251 contribute to the active site. Residues Gln252 to Arg256 are ACP-binding. Asn281 is a catalytic residue.

Belongs to the thiolase-like superfamily. FabH family. In terms of assembly, homodimer.

It localises to the cytoplasm. It carries out the reaction malonyl-[ACP] + acetyl-CoA + H(+) = 3-oxobutanoyl-[ACP] + CO2 + CoA. The protein operates within lipid metabolism; fatty acid biosynthesis. Catalyzes the condensation reaction of fatty acid synthesis by the addition to an acyl acceptor of two carbons from malonyl-ACP. Catalyzes the first condensation reaction which initiates fatty acid synthesis and may therefore play a role in governing the total rate of fatty acid production. Possesses both acetoacetyl-ACP synthase and acetyl transacylase activities. Its substrate specificity determines the biosynthesis of branched-chain and/or straight-chain of fatty acids. This is Beta-ketoacyl-[acyl-carrier-protein] synthase III 2 from Vibrio vulnificus (strain CMCP6).